A 311-amino-acid polypeptide reads, in one-letter code: Porphobilinogen deaminase (311 aa).

Cys245 is subject to S-(dipyrrolylmethanemethyl)cysteine.

This sequence belongs to the HMBS family. As to quaternary structure, monomer. It depends on dipyrromethane as a cofactor.

It carries out the reaction 4 porphobilinogen + H2O = hydroxymethylbilane + 4 NH4(+). It functions in the pathway porphyrin-containing compound metabolism; protoporphyrin-IX biosynthesis; coproporphyrinogen-III from 5-aminolevulinate: step 2/4. In terms of biological role, tetrapolymerization of the monopyrrole PBG into the hydroxymethylbilane pre-uroporphyrinogen in several discrete steps. The protein is Porphobilinogen deaminase of Acinetobacter baylyi (strain ATCC 33305 / BD413 / ADP1).